A 147-amino-acid polypeptide reads, in one-letter code: Hemoglobin subunit gamma-1 (147 aa).

Residue Gly-2 is modified to N-acetylglycine. The 145-residue stretch at 3-147 (HFTEEDKATI…VASALSSRYH (145 aa)) folds into the Globin domain. Thr-13 bears the Phosphothreonine mark. Phosphoserine is present on residues Ser-45, Ser-51, and Ser-53. An N6-acetyllysine modification is found at Lys-60. His-64 lines the heme b pocket. An N6-acetyllysine modification is found at Lys-83. His-93 provides a ligand contact to heme b. Position 94 is an S-nitrosocysteine (Cys-94). Phosphoserine is present on Ser-140.

This sequence belongs to the globin family. Heterotetramer of two alpha chains and two gamma chains in fetal hemoglobin (Hb F). The ratio of gamma-G to gamma-A chains in is approximately 2:1 in infant chimpanzee, and 1:2 in the adult. Red blood cells.

In terms of biological role, gamma chains make up the fetal hemoglobin F, in combination with alpha chains. This Pan troglodytes (Chimpanzee) protein is Hemoglobin subunit gamma-1 (HBG1).